The chain runs to 330 residues: Lysophospholipase D GDPD3 (330 aa).

A topological domain (cytoplasmic) is located at residue Met-1. Residues 2-22 (IPLLYFVLPTLGSYVMLSIFF) traverse the membrane as a helical segment. The Extracellular portion of the chain corresponds to 23–200 (LRRPHLLHTP…ANPEMPMAFT (178 aa)). Positions 39–308 (IRLAAHRGGS…DYPTALRHYL (270 aa)) constitute a GP-PDE domain. 3 residues coordinate a divalent metal cation: Glu-71, Asp-73, and His-86. Residues 201–221 (IWRSFWILLLYYLGLLPFVSI) traverse the membrane as a helical segment. Residues 222-330 (PEKFFFCFLP…EALSCLSLKK (109 aa)) are Cytoplasmic-facing. Residues 311–330 (QEEETQPPQPEALSCLSLKK) form a disordered region.

This sequence belongs to the glycerophosphoryl diester phosphodiesterase family. As to expression, highly expressed in stomach and kidney. In stomach detected in the glandular epithelium. Predominantly expressed in the stomach (at protein level).

The protein resides in the membrane. It is found in the cytoplasm. The protein localises to the perinuclear region. It localises to the endoplasmic reticulum membrane. It carries out the reaction 1-hexadecanoyl-sn-glycero-3-phosphocholine + H2O = 1-hexadecanoyl-sn-glycero-3-phosphate + choline + H(+). It catalyses the reaction 1-O-hexadecyl-sn-glycero-3-phosphocholine + H2O = 1-O-hexadecyl-sn-glycero-3-phosphate + choline + H(+). The enzyme catalyses 1-O-(1Z-octadecenyl)-sn-glycero-3-phospho-N-hexadecanoyl-ethanolamine + H2O = 1-O-(1Z-octadecenyl)-sn-glycero-3-phosphate + N-hexadecanoylethanolamine + H(+). The catalysed reaction is N-(5Z,8Z,11Z,14Z-eicosatetraenoyl)-1-(9Z-octadecenoyl)-sn-glycero-3-phosphoethanolamine + H2O = N-(5Z,8Z,11Z,14Z-eicosatetraenoyl)-ethanolamine + 1-(9Z-octadecenoyl)-sn-glycero-3-phosphate + H(+). It carries out the reaction N,1-di-(9Z-octadecenoyl)-sn-glycero-3-phosphoethanolamine + H2O = N-(9Z-octadecenoyl) ethanolamine + 1-(9Z-octadecenoyl)-sn-glycero-3-phosphate + H(+). It catalyses the reaction N-hexadecanoyl-1-(9Z-octadecenoyl)-sn-glycero-3-phosphoethanolamine + H2O = N-hexadecanoylethanolamine + 1-(9Z-octadecenoyl)-sn-glycero-3-phosphate + H(+). The enzyme catalyses 1-hexadecanoyl-sn-glycero-3-phosphocholine + H2O = sn-glycerol 3-phosphocholine + hexadecanoate + H(+). Its activity is regulated as follows. Lysophospholipase D activity is stimulated by calcium. Loss of lysophospholipase D activity in presence of EDTA. Functionally, hydrolyzes lysoglycerophospholipids to produce lysophosphatidic acid (LPA) and the corresponding amines. Shows a preference for 1-O-alkyl-sn-glycero-3-phosphocholine (lyso-PAF), lysophosphatidylcholine (lyso-PC) and N-acylethanolamine lysophospholipids. Does not display glycerophosphodiester phosphodiesterase activity, since it cannot hydrolyze either glycerophosphoinositol or glycerophosphocholine. This is Lysophospholipase D GDPD3 from Mus musculus (Mouse).